Consider the following 72-residue polypeptide: Alpha-mammal toxin Bot3 (72 aa).

Positions 1–8 (LVMAGVES) are cleaved as a signal peptide. Positions 10–72 (KDGYIVDDRN…VRTKGPGRCN (63 aa)) constitute an LCN-type CS-alpha/beta domain. Disulfide bonds link Cys-20-Cys-71, Cys-24-Cys-44, Cys-30-Cys-54, and Cys-34-Cys-56. Asn-72 carries the asparagine amide modification.

Belongs to the long (4 C-C) scorpion toxin superfamily. Sodium channel inhibitor family. Alpha subfamily. Post-translationally, when the toxin is not amidated, there are 75% loss of toxicity to mice, and total incapacity to bind rat brain synaptosomes. Expressed by the venom gland.

The protein localises to the secreted. Functionally, alpha toxins bind voltage-independently at site-3 of sodium channels (Nav) and inhibit the inactivation of the activated channels, thereby blocking neuronal transmission. Is active against mammals and binds with high affinity to rat brain synaptosomes. This Buthus occitanus tunetanus (Common European scorpion) protein is Alpha-mammal toxin Bot3.